Reading from the N-terminus, the 482-residue chain is Matrix metalloproteinase-20 (482 aa).

A signal peptide spans 1–21; sequence MKVLPASGLAVLVTALKFATA. Residues 22–106 constitute a propeptide that is removed on maturation; that stretch reads DPNLLAATPR…PRCGVPDVAN (85 aa). The Cysteine switch motif lies at 97–104; that stretch reads PRCGVPDV. C99 contacts Zn(2+). The Ca(2+) site is built by E163, A164, and D165. The Zn(2+) site is built by H175 and D177. Residues D182, G183, R185, and T187 each coordinate Ca(2+). H190 contributes to the Zn(2+) binding site. Positions 196, 197, 199, and 201 each coordinate Ca(2+). H203 is a binding site for Zn(2+). Residues D205 and E208 each coordinate Ca(2+). Zn(2+) is bound at residue H225. E226 is a catalytic residue. Positions 229 and 235 each coordinate Zn(2+). 4 Hemopexin repeats span residues 292-342, 343-388, 390-438, and 439-482; these read PDLC…FPQL, MSNV…GFPR, VQRI…FSGV, and SGHI…WIGC. Residues C295 and C482 are joined by a disulfide bond.

This sequence belongs to the peptidase M10A family. The cofactor is Zn(2+). Ca(2+) is required as a cofactor. Autoactivates at least at the 106-Asn-|-Tyr-107 site. Expressed in the enamel organ.

It is found in the secreted. The protein localises to the extracellular space. The protein resides in the extracellular matrix. Degrades amelogenin, the major protein component of the enamel matrix and two of the macromolecules characterizing the cartilage extracellular matrix: aggrecan and the cartilage oligomeric matrix protein (COMP). May play a central role in tooth enamel formation. Cleaves aggrecan at the '360-Asn-|-Phe-361' site. The polypeptide is Matrix metalloproteinase-20 (Mmp20) (Mus musculus (Mouse)).